The following is a 419-amino-acid chain: Synaptotagmin-1 (419 aa).

At 1-58 (MVSESHHEALAAPPVTTVATVLPSNATEPASPGEGKEDAFSKLKEKFMNELHKIPLPP) the chain is on the vesicular side. N-linked (GlcNAc...) asparagine glycosylation is present at N25. The helical transmembrane segment at 59 to 80 (WALIAIAIVAVLLVLTCCFCIC) threads the bilayer. S-palmitoyl cysteine attachment occurs at residues C75, C76, C78, C80, and C83. The Cytoplasmic portion of the chain corresponds to 81–419 (KKCLFKKKNK…EVDAMLAVKK (339 aa)). The segment at 108–139 (KDLGKTMKDQDDDAETGLTDGEEKEEPKEEEK) is disordered. The segment covering 117 to 131 (QDDDAETGLTDGEEK) has biased composition (acidic residues). T126 carries the phosphothreonine modification. Residues 133–379 (EPKEEEKLGK…AIGKVFVGYN (247 aa)) are phospholipid binding. A C2 1 domain is found at 139–258 (KLGKLQYSLD…DFGHVTEEWR (120 aa)). Positions 169, 170, and 176 each coordinate Ca(2+). Residue Y227 is modified to Phosphotyrosine. The Ca(2+) site is built by D228, F229, D230, S233, K234, and D236. S262 is modified (phosphoserine). One can recognise a C2 2 domain in the interval 270–403 (KLGDICFSLR…NPRRPIAQWH (134 aa)). Ca(2+) is bound by residues D301 and D307. Residues S340 and S342 each carry the phosphoserine modification. Ca(2+)-binding residues include D361, D363, and D369.

It belongs to the synaptotagmin family. As to quaternary structure, homotetramer. Heterodimer; heterodimerizes with SYT2 in presence of calcium. Interacts with SCAMP5. Interacts with STON2. Forms a complex with SV2B, syntaxin 1 and SNAP25. Interacts with SV2A, SV2B and SV2C. Interacts with RIMS1. Interacts with PRRT2. Interacts with DNAJC5 in a phosphorylation-dependent manner. Interacts (via N-terminus) with RAB3A. Interacts with SYT12. Interacts with calmodulin. Interacts with DNM1 (via C-terminal proline-rich domain (PRD)); this interaction facilitates vesicle fission during clathrin-mediated endocytosis (CME). It depends on Ca(2+) as a cofactor. In terms of processing, glycosylated.

Its subcellular location is the cytoplasmic vesicle. The protein resides in the secretory vesicle membrane. It localises to the secretory vesicle. The protein localises to the synaptic vesicle membrane. It is found in the chromaffin granule membrane. Its subcellular location is the cytoplasm. Functionally, calcium sensor that participates in triggering neurotransmitter release at the synapse. May have a regulatory role in the membrane interactions during trafficking of synaptic vesicles at the active zone of the synapse. It binds acidic phospholipids with a specificity that requires the presence of both an acidic head group and a diacyl backbone. A Ca(2+)-dependent interaction between synaptotagmin and putative receptors for activated protein kinase C has also been reported. It can bind to at least three additional proteins in a Ca(2+)-independent manner; these are neurexins, syntaxin and AP2. Plays a role in dendrite formation by melanocytes. The polypeptide is Synaptotagmin-1 (Pongo abelii (Sumatran orangutan)).